The following is a 424-amino-acid chain: Histidine--tRNA ligase (424 aa).

Belongs to the class-II aminoacyl-tRNA synthetase family. As to quaternary structure, homodimer.

Its subcellular location is the cytoplasm. It carries out the reaction tRNA(His) + L-histidine + ATP = L-histidyl-tRNA(His) + AMP + diphosphate + H(+). The sequence is that of Histidine--tRNA ligase from Shigella flexneri.